The following is a 334-amino-acid chain: Glyceraldehyde-3-phosphate dehydrogenase (334 aa).

NAD(+) is bound by residues 10 to 11 (RI), D33, K77, and T119. D-glyceraldehyde 3-phosphate contacts are provided by residues 149–151 (SCT), T180, 209–210 (TG), and R232. The Nucleophile role is filled by C150. An NAD(+)-binding site is contributed by N314.

It belongs to the glyceraldehyde-3-phosphate dehydrogenase family. In terms of assembly, homotetramer.

Its subcellular location is the cytoplasm. It carries out the reaction D-glyceraldehyde 3-phosphate + phosphate + NAD(+) = (2R)-3-phospho-glyceroyl phosphate + NADH + H(+). It functions in the pathway carbohydrate degradation; glycolysis; pyruvate from D-glyceraldehyde 3-phosphate: step 1/5. Catalyzes the oxidative phosphorylation of glyceraldehyde 3-phosphate (G3P) to 1,3-bisphosphoglycerate (BPG) using the cofactor NAD. The first reaction step involves the formation of a hemiacetal intermediate between G3P and a cysteine residue, and this hemiacetal intermediate is then oxidized to a thioester, with concomitant reduction of NAD to NADH. The reduced NADH is then exchanged with the second NAD, and the thioester is attacked by a nucleophilic inorganic phosphate to produce BPG. The chain is Glyceraldehyde-3-phosphate dehydrogenase (gap) from Chlamydia trachomatis serovar D (strain ATCC VR-885 / DSM 19411 / UW-3/Cx).